Consider the following 355-residue polypeptide: dTDP-glucose 4,6-dehydratase (355 aa).

Residues 12-13, 33-36, 59-60, 81-85, and Thr-100 contribute to the NAD(+) site; these read FI, DKLT, DI, and LAAES. Ser-85 provides a ligand contact to substrate. Thr-134 is a substrate binding site. Residue Asp-135 is the Proton donor of the active site. Residues Glu-136 and Tyr-160 each act as proton acceptor in the active site. 160-164 is a binding site for NAD(+); the sequence is YSASK. A substrate-binding site is contributed by Asn-189. An NAD(+)-binding site is contributed by Asn-190. Residues 199-200, 215-217, Arg-224, Asn-259, and 293-297 contribute to the substrate site; these read KL, PVY, and DRPGH.

It belongs to the NAD(P)-dependent epimerase/dehydratase family. dTDP-glucose dehydratase subfamily. As to quaternary structure, homodimer. NAD(+) is required as a cofactor.

It catalyses the reaction dTDP-alpha-D-glucose = dTDP-4-dehydro-6-deoxy-alpha-D-glucose + H2O. It functions in the pathway carbohydrate biosynthesis; dTDP-L-rhamnose biosynthesis. Its pathway is bacterial outer membrane biogenesis; LPS O-antigen biosynthesis. Its function is as follows. Catalyzes the dehydration of dTDP-D-glucose to form dTDP-6-deoxy-D-xylo-4-hexulose via a three-step process involving oxidation, dehydration and reduction. This Neisseria meningitidis serogroup B (strain ATCC BAA-335 / MC58) protein is dTDP-glucose 4,6-dehydratase (rfbB1).